Here is an 827-residue protein sequence, read N- to C-terminus: Periplasmic nitrate reductase (827 aa).

Residues 1-32 constitute a signal peptide (tat-type signal); the sequence is MNLSRRDFMKANAALAAASVAGLIIPVKNVNA. Residues 37–93 form the 4Fe-4S Mo/W bis-MGD-type domain; the sequence is ITWDKAVCRFCGTGCAVLVGTKDGRVVASQGDPDAEVNRGLNCIKGYFLPKIMYGKD. Positions 44, 47, 51, and 79 each coordinate [4Fe-4S] cluster. Mo-bis(molybdopterin guanine dinucleotide) is bound by residues K81, Q148, N173, C177, 210–217, 242–246, 261–263, M372, Q376, N482, 508–509, K531, D558, and 717–726; these read WGSNMAEM, STFEH, QSD, SD, and TGRILEHWHT. Residue F793 participates in substrate binding. Mo-bis(molybdopterin guanine dinucleotide)-binding residues include N801 and K818.

The protein belongs to the prokaryotic molybdopterin-containing oxidoreductase family. NasA/NapA/NarB subfamily. In terms of assembly, component of the periplasmic nitrate reductase NapAB complex composed of NapA and NapB. The cofactor is [4Fe-4S] cluster. Mo-bis(molybdopterin guanine dinucleotide) is required as a cofactor. Post-translationally, predicted to be exported by the Tat system. The position of the signal peptide cleavage has not been experimentally proven.

It localises to the periplasm. The enzyme catalyses 2 Fe(II)-[cytochrome] + nitrate + 2 H(+) = 2 Fe(III)-[cytochrome] + nitrite + H2O. Functionally, catalytic subunit of the periplasmic nitrate reductase complex NapAB. Receives electrons from NapB and catalyzes the reduction of nitrate to nitrite. This chain is Periplasmic nitrate reductase, found in Histophilus somni (strain 2336) (Haemophilus somnus).